The following is a 109-amino-acid chain: Ycf20-like protein (109 aa).

Belongs to the ycf20 family.

The chain is Ycf20-like protein from Synechocystis sp. (strain ATCC 27184 / PCC 6803 / Kazusa).